The chain runs to 544 residues: Chaperonin GroEL 2 (544 aa).

ATP is bound by residues 29–32, 86–90, glycine 413, 482–484, and aspartate 498; these read TLGP, DGTTT, and NVL.

It belongs to the chaperonin (HSP60) family. As to quaternary structure, forms a cylinder of 14 subunits composed of two heptameric rings stacked back-to-back. Interacts with the co-chaperonin GroES.

The protein localises to the cytoplasm. The enzyme catalyses ATP + H2O + a folded polypeptide = ADP + phosphate + an unfolded polypeptide.. In terms of biological role, together with its co-chaperonin GroES, plays an essential role in assisting protein folding. The GroEL-GroES system forms a nano-cage that allows encapsulation of the non-native substrate proteins and provides a physical environment optimized to promote and accelerate protein folding. The sequence is that of Chaperonin GroEL 2 from Roseiflexus sp. (strain RS-1).